The primary structure comprises 289 residues: Probable signal peptidase I (289 aa).

At 1–53 the chain is on the cytoplasmic side; the sequence is MTETTDSVPEPPSDADQLQPKVSICGLDMPAEVSETAAEAAIGVSEPKKRSAL. The helical transmembrane segment at 54–74 threads the bilayer; sequence WEFAILAVIAIGLYYVMLTFV. Residues 75-289 lie on the Extracellular side of the membrane; it reads ARPYLIPSES…VGSVNSQQGQ (215 aa). Active-site residues include Ser84 and Lys162.

This sequence belongs to the peptidase S26 family.

Its subcellular location is the cell membrane. The catalysed reaction is Cleavage of hydrophobic, N-terminal signal or leader sequences from secreted and periplasmic proteins.. The protein is Probable signal peptidase I (lepB) of Mycobacterium leprae (strain TN).